Consider the following 424-residue polypeptide: NADH-quinone oxidoreductase subunit H (424 aa).

Helical transmembrane passes span Leu-11–Ile-31, Phe-79–Ile-99, Leu-119–Leu-139, Val-160–Ser-180, Val-193–Glu-213, Val-255–Leu-275, Trp-283–Leu-303, Ala-317–Ile-337, and Tyr-347–Leu-367. The tract at residues Ala-376–Gly-424 is disordered.

It belongs to the complex I subunit 1 family. NDH-1 is composed of 14 different subunits. Subunits NuoA, H, J, K, L, M, N constitute the membrane sector of the complex.

Its subcellular location is the cell membrane. The catalysed reaction is a quinone + NADH + 5 H(+)(in) = a quinol + NAD(+) + 4 H(+)(out). Functionally, NDH-1 shuttles electrons from NADH, via FMN and iron-sulfur (Fe-S) centers, to quinones in the respiratory chain. The immediate electron acceptor for the enzyme in this species is believed to be menaquinone. Couples the redox reaction to proton translocation (for every two electrons transferred, four hydrogen ions are translocated across the cytoplasmic membrane), and thus conserves the redox energy in a proton gradient. This subunit may bind ubiquinone. This Mycobacterium ulcerans (strain Agy99) protein is NADH-quinone oxidoreductase subunit H.